The following is a 37-amino-acid chain: uncharacterized protein (37 aa).

Belongs to the poxviridae A56.5 protein family.

This is an uncharacterized protein from Vaccinia virus (strain Western Reserve) (VACV).